The primary structure comprises 93 residues: RNA silencing suppressor (93 aa).

Residues 44 to 47 (CKRR) form a basic region. Residues 54–69 (CWRCYRVYPPVCNSKC) form a C4-type zinc finger.

Belongs to the carlaviruses nucleic acid-binding protein family.

In terms of biological role, suppressor of viral-induced RNA silencing. The potential mechanism of action is based on sequestering siRNAs. This Solanum tuberosum (Potato) protein is RNA silencing suppressor.